We begin with the raw amino-acid sequence, 554 residues long: Nonribosomal peptide synthetase ALT12 (554 aa).

The Carrier domain occupies 1 to 76 (MASLEHMKRI…TLWEAMNDTQ (76 aa)). S35 is subject to O-(pantetheine 4'-phosphoryl)serine. Residues 124–434 (VQDNVLCVAP…QRIQNEITST (311 aa)) form a condensation region.

Belongs to the NRP synthetase family.

It functions in the pathway mycotoxin biosynthesis. Its function is as follows. Nonribosomal peptide synthetase; part of the gene cluster that mediates the biosynthesis of the host-selective toxins (HSTs) AAL-toxins, sphinganine-analog mycotoxins responsible for Alternaria stem canker on tomato by the tomato pathotype. The biosynthesis starts with the polyketide synthase ALT1-catalyzed C-16 carbon chain assembly from one starter acetyl-CoA unit with malonyl-CoA extender units. ALT1 also selectively transfers methyl groups at the first and the third cycle of chain elongation for AAL toxin. The C-16 polyketide chain is released from the enzyme by a nucleophilic attack of a carbanion, which is derived from R-carbon of glycin by decarboxylation, on the carbonyl carbon of polyketide acyl chain. This step is probably catalyzed by a pyridoxal 5'-phosphate-dependent aminoacyl transferase ALT4. The respective functions of the other enzymes encoded by the cluster have still to be elucidated. The sphingosine N-acyltransferase-like protein ALT7 seems not to act as a resistance/self-tolerance factor against the toxin in the toxin biosynthetic gene cluster, contrary to what is expected. In Alternaria alternata (Alternaria rot fungus), this protein is Nonribosomal peptide synthetase ALT12.